The following is a 216-amino-acid chain: Regulator of G-protein signaling 19 (216 aa).

Basic and acidic residues predominate over residues Met1–Arg19. The disordered stretch occupies residues Met1 to Pro30. Position 24 is a phosphoserine; by CK2 (Ser24). The RGS domain occupies Ser90–Leu206. Position 97 is a phosphoserine (Ser97). Ser151 carries the post-translational modification Phosphoserine; by MAPK1 and MAPK3. Positions Leu207 to Ala216 are interaction with GIPC.

Interacts with GIPC PDZ domain. Interacts with GNAO1. In terms of processing, fatty acylated. Heavily palmitoylated in the cysteine string motif. Phosphorylated, mainly on serine residues.

The protein resides in the membrane. Its function is as follows. Inhibits signal transduction by increasing the GTPase activity of G protein alpha subunits thereby driving them into their inactive GDP-bound form. Binds to G-alpha subfamily 1 members, predominantly to G(i)-alpha-3. Activity on G(z)-alpha is inhibited by phosphorylation and palmitoylation of the G-protein. This chain is Regulator of G-protein signaling 19 (Rgs19), found in Rattus norvegicus (Rat).